We begin with the raw amino-acid sequence, 350 residues long: Histidinol-phosphate aminotransferase 1 (350 aa).

Position 210 is an N6-(pyridoxal phosphate)lysine (Lys-210).

This sequence belongs to the class-II pyridoxal-phosphate-dependent aminotransferase family. Histidinol-phosphate aminotransferase subfamily. As to quaternary structure, homodimer. Pyridoxal 5'-phosphate is required as a cofactor.

It carries out the reaction L-histidinol phosphate + 2-oxoglutarate = 3-(imidazol-4-yl)-2-oxopropyl phosphate + L-glutamate. The protein operates within amino-acid biosynthesis; L-histidine biosynthesis; L-histidine from 5-phospho-alpha-D-ribose 1-diphosphate: step 7/9. This chain is Histidinol-phosphate aminotransferase 1, found in Pseudomonas fluorescens (strain Pf0-1).